Reading from the N-terminus, the 1354-residue chain is RNA-directed RNA polymerase VP1 (1354 aa).

The enzyme catalyses RNA(n) + a ribonucleoside 5'-triphosphate = RNA(n+1) + diphosphate. Functionally, RNA-directed RNA polymerase that is involved in transcription and genome replication. Following infection, it catalyzes the synthesis of fully conservative plus strands. After core assembly, which consists in recruitment of one capped plus-strand for each genomic segments and polymerase complexes, the polymerase switches mode and catalyzes the synthesis of complementary minus-strands. In Cryphonectria parasitica mycoreovirus 1 (strain 9B21) (CpMYRV-1), this protein is RNA-directed RNA polymerase VP1.